A 2197-amino-acid chain; its full sequence is Protein Ycf2 (2197 aa).

Position 1539 to 1546 (1539 to 1546 (GSIGTGRS)) interacts with ATP.

It belongs to the Ycf2 family.

Its subcellular location is the plastid. The protein localises to the chloroplast stroma. Probable ATPase of unknown function. Its presence in a non-photosynthetic plant (Epifagus virginiana) and experiments in tobacco indicate that it has an essential function which is probably not related to photosynthesis. The polypeptide is Protein Ycf2 (Ipomoea purpurea (Common morning glory)).